The following is a 324-amino-acid chain: Methionyl-tRNA formyltransferase (324 aa).

Residue 114–117 participates in (6S)-5,6,7,8-tetrahydrofolate binding; that stretch reads SLLP.

Belongs to the Fmt family.

It catalyses the reaction L-methionyl-tRNA(fMet) + (6R)-10-formyltetrahydrofolate = N-formyl-L-methionyl-tRNA(fMet) + (6S)-5,6,7,8-tetrahydrofolate + H(+). In terms of biological role, attaches a formyl group to the free amino group of methionyl-tRNA(fMet). The formyl group appears to play a dual role in the initiator identity of N-formylmethionyl-tRNA by promoting its recognition by IF2 and preventing the misappropriation of this tRNA by the elongation apparatus. The polypeptide is Methionyl-tRNA formyltransferase (Phocaeicola vulgatus (strain ATCC 8482 / DSM 1447 / JCM 5826 / CCUG 4940 / NBRC 14291 / NCTC 11154) (Bacteroides vulgatus)).